A 49-amino-acid chain; its full sequence is Large ribosomal subunit protein bL33 (49 aa).

This sequence belongs to the bacterial ribosomal protein bL33 family.

This chain is Large ribosomal subunit protein bL33, found in Syntrophus aciditrophicus (strain SB).